The following is a 345-amino-acid chain: Anthranilate phosphoribosyltransferase (345 aa).

Residues glycine 83, 86 to 87, threonine 91, 93 to 96, 111 to 119, and serine 123 contribute to the 5-phospho-alpha-D-ribose 1-diphosphate site; these read GD, NIST, and KHGNRNLSS. Glycine 83 is an anthranilate binding site. Serine 95 lines the Mg(2+) pocket. Position 114 (asparagine 114) interacts with anthranilate. Arginine 169 is a binding site for anthranilate. 2 residues coordinate Mg(2+): aspartate 228 and glutamate 229.

This sequence belongs to the anthranilate phosphoribosyltransferase family. As to quaternary structure, homodimer. Mg(2+) is required as a cofactor.

It carries out the reaction N-(5-phospho-beta-D-ribosyl)anthranilate + diphosphate = 5-phospho-alpha-D-ribose 1-diphosphate + anthranilate. It functions in the pathway amino-acid biosynthesis; L-tryptophan biosynthesis; L-tryptophan from chorismate: step 2/5. In terms of biological role, catalyzes the transfer of the phosphoribosyl group of 5-phosphorylribose-1-pyrophosphate (PRPP) to anthranilate to yield N-(5'-phosphoribosyl)-anthranilate (PRA). The protein is Anthranilate phosphoribosyltransferase of Paracoccus denitrificans (strain Pd 1222).